The primary structure comprises 466 residues: tRNA-2-methylthio-N(6)-dimethylallyladenosine synthase (466 aa).

One can recognise an MTTase N-terminal domain in the interval 21-137 (GSYWITTFGC…LEDLLNQVDN (117 aa)). Cys-30, Cys-66, Cys-100, Cys-172, Cys-176, and Cys-179 together coordinate [4Fe-4S] cluster. The region spanning 158–395 (RDSNICAWVN…NLLVEQTAKD (238 aa)) is the Radical SAM core domain. The TRAM domain maps to 398–466 (TRYHNQIVEV…AFSLTGSPIQ (69 aa)).

The protein belongs to the methylthiotransferase family. MiaB subfamily. Monomer. It depends on [4Fe-4S] cluster as a cofactor.

Its subcellular location is the cytoplasm. The enzyme catalyses N(6)-dimethylallyladenosine(37) in tRNA + (sulfur carrier)-SH + AH2 + 2 S-adenosyl-L-methionine = 2-methylsulfanyl-N(6)-dimethylallyladenosine(37) in tRNA + (sulfur carrier)-H + 5'-deoxyadenosine + L-methionine + A + S-adenosyl-L-homocysteine + 2 H(+). Functionally, catalyzes the methylthiolation of N6-(dimethylallyl)adenosine (i(6)A), leading to the formation of 2-methylthio-N6-(dimethylallyl)adenosine (ms(2)i(6)A) at position 37 in tRNAs that read codons beginning with uridine. The protein is tRNA-2-methylthio-N(6)-dimethylallyladenosine synthase of Prochlorococcus marinus (strain SARG / CCMP1375 / SS120).